A 354-amino-acid polypeptide reads, in one-letter code: Ornithine transcarbamylase, mitochondrial (354 aa).

The transit peptide at 1–32 directs the protein to the mitochondrion; the sequence is MLFNLKNLYRITKLTQNSKHLPRHFCRGPPNQ. Carbamoyl phosphate-binding positions include 90 to 94, R141, and H168; that span reads STRTR. L-ornithine is bound at residue R141. L-ornithine contacts are provided by residues N199, 263–267, 302–305, and R330; these read DTWIS and HCLP. C303 is a catalytic residue. R330 is a carbamoyl phosphate binding site.

This sequence belongs to the aspartate/ornithine carbamoyltransferase superfamily. OTCase family. Homotrimer. In terms of processing, cleavage of the precursor form to the active form occurs only in the kidney. In terms of tissue distribution, expressed in kidney, brain, heart, liver, pancreas, gizzard, small intestine and breast muscle. More abundant in mitochondrion-rich organs (heart, liver and brain) than in other organs. Activity is only detected in the kidney.

The protein localises to the mitochondrion matrix. It carries out the reaction carbamoyl phosphate + L-ornithine = L-citrulline + phosphate + H(+). The protein operates within nitrogen metabolism; urea cycle; L-citrulline from L-ornithine and carbamoyl phosphate: step 1/1. Its activity is regulated as follows. Inhibition by ornithine increases at higher pH. Its function is as follows. Catalyzes the second step of the urea cycle, the condensation of carbamoyl phosphate with L-ornithine to form L-citrulline. The urea cycle ensures the detoxification of ammonia by converting it to urea for excretion. This is Ornithine transcarbamylase, mitochondrial from Gallus gallus (Chicken).